Reading from the N-terminus, the 277-residue chain is Phosphatidylglycerol--prolipoprotein diacylglyceryl transferase (277 aa).

4 helical membrane passes run 16–36 (LGPI…LFGW), 58–78 (FLTW…VLFY), 93–113 (IWSG…AILL), and 119–139 (GFSP…GLFL). R141 is a binding site for a 1,2-diacyl-sn-glycero-3-phospho-(1'-sn-glycerol). 3 consecutive transmembrane segments (helical) span residues 182 to 202 (AALE…KPAV), 207 to 227 (GTLS…GEVF), and 239 to 259 (FGVT…LWIL).

This sequence belongs to the Lgt family.

It localises to the cell inner membrane. It carries out the reaction L-cysteinyl-[prolipoprotein] + a 1,2-diacyl-sn-glycero-3-phospho-(1'-sn-glycerol) = an S-1,2-diacyl-sn-glyceryl-L-cysteinyl-[prolipoprotein] + sn-glycerol 1-phosphate + H(+). It participates in protein modification; lipoprotein biosynthesis (diacylglyceryl transfer). Its function is as follows. Catalyzes the transfer of the diacylglyceryl group from phosphatidylglycerol to the sulfhydryl group of the N-terminal cysteine of a prolipoprotein, the first step in the formation of mature lipoproteins. In Rhodospirillum centenum (strain ATCC 51521 / SW), this protein is Phosphatidylglycerol--prolipoprotein diacylglyceryl transferase.